The primary structure comprises 1224 residues: WD repeat-containing protein 11 (1224 aa).

WD repeat units follow at residues 59-108 (KHKA…AQCE) and 111-154 (EHAK…KLWK). Serine 205 and serine 209 each carry phosphoserine. One copy of the WD 3 repeat lies at 354-393 (KTVRPFSMVCCPVNENAAALVVSDGRVMIWELKSAVCNRN). Phosphoserine is present on residues serine 402 and serine 406. WD repeat units follow at residues 471–510 (RMCPPLTTKNIKMYQPLLAVGTSNGSVLVYHLTSGLLHKE), 566–605 (NDESAIEMIKVSHLKQYLAVVFRDKPLELWDVRTCTLLRE), 708–745 (GSMGSITCIAWKGDTLVLGDMDGNLNFWDLKGRVSRGI), 747–787 (THRS…MVSS), 793–831 (NVTFRILDVDWCTSDKVILASDDGCIRVLEMSMKSACFR), and 893–940 (SLSN…HSLS).

Component of the complex WDR11 composed of C17orf75, FAM91A1 and WDR11; FAM91A1 and WDR11 are required for proper location of the complex. Interacts (via the N-terminal and the central portion of the protein) with EMX1. Interacts with GLI3; the interaction associateS EMX1 with GLI3. Interacts with TBC1D23; this interaction may be indirect and recruits TBC1D23 to AP-1-derived vesicles. Ubiquitous.

Its subcellular location is the cytoplasm. It localises to the cytoskeleton. The protein localises to the cilium basal body. It is found in the nucleus. The protein resides in the cilium axoneme. Its subcellular location is the cytoplasmic vesicle. It localises to the golgi apparatus. The protein localises to the trans-Golgi network. Involved in the Hedgehog (Hh) signaling pathway, is essential for normal ciliogenesis. Regulates the proteolytic processing of GLI3 and cooperates with the transcription factor EMX1 in the induction of downstream Hh pathway gene expression and gonadotropin-releasing hormone production. WDR11 complex facilitates the tethering of Adaptor protein-1 complex (AP-1)-derived vesicles. WDR11 complex acts together with TBC1D23 to facilitate the golgin-mediated capture of vesicles generated using AP-1. The sequence is that of WD repeat-containing protein 11 (WDR11) from Homo sapiens (Human).